A 675-amino-acid polypeptide reads, in one-letter code: Potassium-transporting ATPase ATP-binding subunit (675 aa).

4 helical membrane-spanning segments follow: residues 34–54 (IMFV…FPDI), 65–85 (LITI…SEAF), 216–236 (IALF…IVTL), and 245–265 (LILP…TTIG). Aspartate 304 (4-aspartylphosphate intermediate) is an active-site residue. Residues aspartate 341, glutamate 345, 372-379 (FTAETRMS), and lysine 390 contribute to the ATP site. Mg(2+)-binding residues include aspartate 513 and aspartate 517. 3 helical membrane passes run 569 to 591 (ALTT…ALMM), 611 to 631 (AIIS…PIAM), and 644 to 664 (IFIN…FLGI).

This sequence belongs to the cation transport ATPase (P-type) (TC 3.A.3) family. Type IA subfamily. The system is composed of three essential subunits: KdpA, KdpB and KdpC.

The protein localises to the cell membrane. The enzyme catalyses K(+)(out) + ATP + H2O = K(+)(in) + ADP + phosphate + H(+). In terms of biological role, part of the high-affinity ATP-driven potassium transport (or Kdp) system, which catalyzes the hydrolysis of ATP coupled with the electrogenic transport of potassium into the cytoplasm. This subunit is responsible for energy coupling to the transport system and for the release of the potassium ions to the cytoplasm. In Staphylococcus aureus (strain bovine RF122 / ET3-1), this protein is Potassium-transporting ATPase ATP-binding subunit.